The following is a 229-amino-acid chain: Extracellular endonuclease (229 aa).

An N-terminal signal peptide occupies residues 1-19; it reads MSARFIAVFCLFFTVTAHA. The interval 69-95 is disordered; that stretch reads RADASNGNTSSRPGRSGISASAGKPVG. Polar residues predominate over residues 71–81; sequence DASNGNTSSRP.

The protein belongs to the EndA/NucM nuclease family.

Its subcellular location is the secreted. The sequence is that of Extracellular endonuclease (endX) from Pseudomonas fluorescens biotype A.